A 578-amino-acid polypeptide reads, in one-letter code: Triokinase/FMN cyclase (578 aa).

Residues 9–336 (SVEGCAGDAL…IDAETNAKAW (328 aa)) form the DhaK domain. Residues 56-59 (GSGH), Lys109, and Asp114 contribute to the dihydroxyacetone site. His221 serves as the catalytic Tele-hemiaminal-histidine intermediate. A DhaL domain is found at 372–571 (KQMTLVLDRI…AAAIFRAILE (200 aa)). Residues 401–404 (DGDC), 446–447 (SS), Gly486, and 494–495 (TM) contribute to the ATP site. Ser511 and Ser545 each carry phosphoserine. 556-558 (DPG) is an ATP binding site.

The protein belongs to the dihydroxyacetone kinase (DAK) family. As to quaternary structure, homodimer. Interacts with IFIH1 (via the CARD domains), the interaction is inhibited by viral infection. It depends on Mg(2+) as a cofactor. The cofactor is Mn(2+). Co(2+) serves as cofactor.

The enzyme catalyses dihydroxyacetone + ATP = dihydroxyacetone phosphate + ADP + H(+). It carries out the reaction D-glyceraldehyde + ATP = D-glyceraldehyde 3-phosphate + ADP + H(+). The catalysed reaction is FAD = riboflavin cyclic-4',5'-phosphate + AMP + H(+). Each activity is inhibited by the substrate(s) of the other. Functionally, catalyzes both the phosphorylation of dihydroxyacetone and of glyceraldehyde, and the splitting of ribonucleoside diphosphate-X compounds among which FAD is the best substrate. Represses IFIH1-mediated cellular antiviral response. This Rattus norvegicus (Rat) protein is Triokinase/FMN cyclase (Tkfc).